A 505-amino-acid polypeptide reads, in one-letter code: Cytochrome P450 4Z1 (505 aa).

The Cytoplasmic segment spans residues Met-1 to Leu-9. The chain crosses the membrane as a helical; Signal-anchor for type II membrane protein span at residues Met-10–Ile-30. Over Arg-31–Cys-505 the chain is Lumenal. Position 452 (Cys-452) interacts with heme.

The protein belongs to the cytochrome P450 family. It depends on heme as a cofactor. In terms of tissue distribution, preferentially detected in breast carcinoma tissue and mammary gland, whereas only marginal expression is found in all other tested tissues.

It is found in the endoplasmic reticulum membrane. The protein localises to the microsome membrane. The enzyme catalyses an organic molecule + reduced [NADPH--hemoprotein reductase] + O2 = an alcohol + oxidized [NADPH--hemoprotein reductase] + H2O + H(+). The catalysed reaction is dodecanoate + reduced [NADPH--hemoprotein reductase] + O2 = 7-hydroxydodecanoate + oxidized [NADPH--hemoprotein reductase] + H2O + H(+). It carries out the reaction dodecanoate + reduced [NADPH--hemoprotein reductase] + O2 = 8-hydroxydodecanoate + oxidized [NADPH--hemoprotein reductase] + H2O + H(+). It catalyses the reaction dodecanoate + reduced [NADPH--hemoprotein reductase] + O2 = 9-hydroxydodecanoate + oxidized [NADPH--hemoprotein reductase] + H2O + H(+). The enzyme catalyses dodecanoate + reduced [NADPH--hemoprotein reductase] + O2 = 10-hydroxydodecanoate + oxidized [NADPH--hemoprotein reductase] + H2O + H(+). The catalysed reaction is dodecanoate + reduced [NADPH--hemoprotein reductase] + O2 = 11-hydroxydodecanoate + oxidized [NADPH--hemoprotein reductase] + H2O + H(+). It carries out the reaction tetradecanoate + reduced [NADPH--hemoprotein reductase] + O2 = 9-hydroxytetradecanoate + oxidized [NADPH--hemoprotein reductase] + H2O + H(+). It catalyses the reaction tetradecanoate + reduced [NADPH--hemoprotein reductase] + O2 = 10-hydroxytetradecanoate + oxidized [NADPH--hemoprotein reductase] + H2O + H(+). The enzyme catalyses tetradecanoate + reduced [NADPH--hemoprotein reductase] + O2 = 11-hydroxytetradecanoate + oxidized [NADPH--hemoprotein reductase] + H2O + H(+). The catalysed reaction is tetradecanoate + reduced [NADPH--hemoprotein reductase] + O2 = 12-hydroxytetradecanoate + oxidized [NADPH--hemoprotein reductase] + H2O + H(+). It carries out the reaction (5Z,8Z,11Z,14Z)-eicosatetraenoate + reduced [NADPH--hemoprotein reductase] + O2 = (14S,15R)-epoxy-(5Z,8Z,11Z)-eicosatrienoate + oxidized [NADPH--hemoprotein reductase] + H2O + H(+). Its function is as follows. A cytochrome P450 monooxygenase that catalyzes the in-chain oxidation of fatty acids. Catalyzes the hydroxylation of carbon-hydrogen bonds. Hydroxylates lauric and myristic acids predominantly at the omega-4 and omega-2 positions, respectively. Catalyzes the epoxidation of double bonds of polyunsaturated fatty acids (PUFA). Displays an absolute stereoselectivity in the epoxidation of arachidonic acid producing the 14(S),15(R)-epoxyeicosatrienoic acid (EET) enantiomer. Mechanistically, uses molecular oxygen inserting one oxygen atom into a substrate, and reducing the second into a water molecule, with two electrons provided by NADPH via cytochrome P450 reductase (CPR; NADPH-ferrihemoprotein reductase). In Homo sapiens (Human), this protein is Cytochrome P450 4Z1.